A 104-amino-acid polypeptide reads, in one-letter code: Phosphate metabolism protein 6 (104 aa).

The chain crosses the membrane as a helical span at residues 76–96 (IIVIIIVLLLYSLTMVGLFYV).

The protein resides in the vacuole membrane. The chain is Phosphate metabolism protein 6 (PHM6) from Saccharomyces cerevisiae (strain ATCC 204508 / S288c) (Baker's yeast).